The primary structure comprises 217 residues: External core antigen (217 aa).

The first 20 residues, 1-20, serve as a signal peptide directing secretion; that stretch reads MYLFHLCLVFACVSCPTVQA. Residues 26 to 28 are HBEAG; that stretch reads GWL. The segment covering 181–210 has biased composition (basic residues); it reads RRGSARVVRSPRRRTPSPRRRRSQSPRRRP. The disordered stretch occupies residues 181-217; that stretch reads RRGSARVVRSPRRRTPSPRRRRSQSPRRRPQSPASNC. The 1; half-length repeat unit spans residues 190–196; sequence SPRRRTP. The segment at 190 to 211 is 3 X 8 AA approximate repeats of S-P-R-R-R-R-[PS]-Q; that stretch reads SPRRRTPSPRRRRSQSPRRRPQ. A propeptide spanning residues 190-217 is cleaved from the precursor; that stretch reads SPRRRTPSPRRRRSQSPRRRPQSPASNC. 2 consecutive repeat copies span residues 197–204 and 205–211.

The protein belongs to the orthohepadnavirus precore antigen family. Homodimerizes. Phosphorylated. Post-translationally, cleaved by host furin.

It is found in the secreted. It localises to the host nucleus. In terms of biological role, may regulate immune response to the intracellular capsid in acting as a T-cell tolerogen, by having an immunoregulatory effect which prevents destruction of infected cells by cytotoxic T-cells. This immune regulation may predispose to chronicity during perinatal infections and prevent severe liver injury during adult infections. This is External core antigen from Urocitellus parryii kennicottii (ASHV).